Here is a 151-residue protein sequence, read N- to C-terminus: Transcriptional repressor NrdR (151 aa).

The segment at 3-34 (CPYCGSLDNKVIDSRLSRDDTETRRRRECLEC) is a zinc-finger region. Residues 49 to 139 (LMIVKKDGRR…VYREFKDVHD (91 aa)) enclose the ATP-cone domain.

This sequence belongs to the NrdR family. Zn(2+) is required as a cofactor.

Negatively regulates transcription of bacterial ribonucleotide reductase nrd genes and operons by binding to NrdR-boxes. The polypeptide is Transcriptional repressor NrdR (Desulfosudis oleivorans (strain DSM 6200 / JCM 39069 / Hxd3) (Desulfococcus oleovorans)).